The chain runs to 432 residues: Glyceraldehyde-3-phosphate dehydrogenase, testis-specific (432 aa).

The segment at 1-97 is testis-specific N-terminal extension; that stretch reads MSRRDVVLTN…PPPPPPPKPA (97 aa). The tract at residues 40 to 101 is disordered; that stretch reads PPPPKVEEPP…PPPKPAKELT (62 aa). Residues 44 to 55 are compositionally biased toward basic and acidic residues; sequence KVEEPPPPKEEP. Composition is skewed to pro residues over residues 56–67 and 75–95; these read PPPPPPPPPPQI and APPPPPPPPPPPPPPPPPPPK. Residues 109 to 110, Asp130, Lys175, Tyr197, and Thr217 each bind NAD(+); that span reads RI. Residues 247–249, Thr278, 307–308, and Arg330 each bind D-glyceraldehyde 3-phosphate; these read SCT and TG. The active-site Nucleophile is the Cys248. Position 350 is a phosphoserine (Ser350). An NAD(+)-binding site is contributed by Asn412.

The protein belongs to the glyceraldehyde-3-phosphate dehydrogenase family. Homotetramer. As to expression, expressed in both head and flagellum of epididymal sperm.

It localises to the cytoplasm. The enzyme catalyses D-glyceraldehyde 3-phosphate + phosphate + NAD(+) = (2R)-3-phospho-glyceroyl phosphate + NADH + H(+). The protein operates within carbohydrate degradation; glycolysis; pyruvate from D-glyceraldehyde 3-phosphate: step 1/5. Its function is as follows. May play an important role in regulating the switch between different pathways for energy production during spermiogenesis and in the spermatozoon. Required for sperm motility and male fertility. This chain is Glyceraldehyde-3-phosphate dehydrogenase, testis-specific (Gapdhs), found in Rattus norvegicus (Rat).